The primary structure comprises 331 residues: DNA double-strand break repair nuclease NurA (331 aa).

Aspartate 56 and aspartate 131 together coordinate Mn(2+).

The protein belongs to the NurA family. In terms of assembly, homodimer. Interacts with SSB. Mn(2+) is required as a cofactor.

Its activity is regulated as follows. The 5'-3' ssDNA and dsDNA exonuclease and ssDNA endonuclease activities are inhibited by SSB (single-stranded DNA-binding protein). Its function is as follows. Involved in DNA double-strand break (DSB) repair. Probably acts with HerA to stimulate resection of the 5' strand and produce the long 3' single-strand that is required for RadA loading. Exhibits both single-stranded endonuclease activity and 5'-3' exonuclease activity on single-stranded and double-stranded DNA. This chain is DNA double-strand break repair nuclease NurA, found in Sulfurisphaera tokodaii (strain DSM 16993 / JCM 10545 / NBRC 100140 / 7) (Sulfolobus tokodaii).